The primary structure comprises 82 residues: Putative membrane protein insertion efficiency factor (82 aa).

The protein belongs to the UPF0161 family.

Its subcellular location is the cell inner membrane. Functionally, could be involved in insertion of integral membrane proteins into the membrane. This chain is Putative membrane protein insertion efficiency factor, found in Colwellia psychrerythraea (strain 34H / ATCC BAA-681) (Vibrio psychroerythus).